A 189-amino-acid chain; its full sequence is dCTP deaminase (189 aa).

Residues 112–117 (KSTYAR), 136–138 (TLE), glutamine 157, tyrosine 171, and glutamine 181 contribute to the dCTP site. The Proton donor/acceptor role is filled by glutamate 138.

The protein belongs to the dCTP deaminase family. In terms of assembly, homotrimer.

The catalysed reaction is dCTP + H2O + H(+) = dUTP + NH4(+). The protein operates within pyrimidine metabolism; dUMP biosynthesis; dUMP from dCTP (dUTP route): step 1/2. Functionally, catalyzes the deamination of dCTP to dUTP. This Halorhodospira halophila (strain DSM 244 / SL1) (Ectothiorhodospira halophila (strain DSM 244 / SL1)) protein is dCTP deaminase.